The chain runs to 84 residues: GTP cyclohydrolase 1 feedback regulatory protein (84 aa).

The protein belongs to the GFRP family. As to quaternary structure, homopentamer. Forms a complex with GCH1 where a GCH1 homodecamer is sandwiched by two GFRP homopentamers.

The protein localises to the nucleus. Its subcellular location is the nucleus membrane. It is found in the cytoplasm. It localises to the cytosol. Mediates tetrahydrobiopterin inhibition of GTP cyclohydrolase 1. In Xenopus tropicalis (Western clawed frog), this protein is GTP cyclohydrolase 1 feedback regulatory protein (gchfr).